Here is a 226-residue protein sequence, read N- to C-terminus: Pro-opiomelanocortin (226 aa).

The signal sequence occupies residues 1-22 (MVCAPWLLAVVVVCVCNPGVGG). A propeptide spanning residues 23-97 (QCWDSSHCKD…DPEPHSDKRH (75 aa)) is cleaved from the precursor. At Ser98 the chain carries N-acetylserine; in Corticotropin. N-acetyltyrosine; in Beta-endorphin and Met-enkephalin is present on Tyr198.

This sequence belongs to the POMC family. In terms of processing, specific enzymatic cleavages at paired basic residues yield the different active peptides.

The protein localises to the secreted. Its function is as follows. Stimulates the adrenal glands to release cortisol. Functionally, anorexigenic peptide. Increases the pigmentation of skin by increasing melanin production in melanocytes. In terms of biological role, increases the pigmentation of skin by increasing melanin production in melanocytes. Endogenous orexigenic opiate. Its function is as follows. Endogenous opiate. The protein is Pro-opiomelanocortin (pomc) of Oncorhynchus keta (Chum salmon).